Reading from the N-terminus, the 257-residue chain is UPF0246 protein ASA_3634 (257 aa).

It belongs to the UPF0246 family.

In Aeromonas salmonicida (strain A449), this protein is UPF0246 protein ASA_3634.